The sequence spans 252 residues: NAC domain-containing protein 83 (252 aa).

In terms of domain architecture, NAC spans leucine 14–lysine 160. The DNA-binding element occupies valine 110–lysine 166. 2 disordered regions span residues asparagine 165–threonine 194 and leucine 217–arginine 252. 2 stretches are compositionally biased toward low complexity: residues asparagine 180–threonine 194 and leucine 219–arginine 252. Positions arginine 213–serine 226 are PEST-like.

As to quaternary structure, interacts with NAC007/VND4, NAC026/VND5 and NAC030/VND7. Interacts with the mungbean yellow mosaic virus (MYMV) AC1 replication-associated protein. As to expression, expressed in xylem and phloem cells in roots and inflorescence stems. Highly expressed in senescent leaves. Expressed in roots, and abscission and dehiscence tissues, such as axils of bracts and abscission zones in cauline leaves and siliques.

The protein resides in the nucleus. Its function is as follows. Transcriptional repressor that negatively regulates the expression of genes involved in xylem vessel formation. Represses the transcriptional activation activity of NAC030/VND7, which regulates protoxylem vessel differentiation by promoting immature xylem vessel-specific genes expression. Transcriptional activator that regulates the COLD-REGULATED (COR15A and COR15B) and RESPONSIVE TO DEHYDRATION (LTI78/RD29A and LTI65/RD29B) genes by binding directly to their promoters. Mediates signaling crosstalk between salt stress response and leaf aging process. May play a role in DNA replication of mungbean yellow mosaic virus. This chain is NAC domain-containing protein 83, found in Arabidopsis thaliana (Mouse-ear cress).